The sequence spans 432 residues: Monooxygenase penA (432 aa).

A helical membrane pass occupies residues 7–29; that stretch reads FKIAIIGAGPAGLTLASLLTASP. Asn33 is a glycosylation site (N-linked (GlcNAc...) asparagine).

It belongs to the aromatic-ring hydroxylase family. FAD serves as cofactor.

The protein localises to the membrane. The protein operates within secondary metabolite biosynthesis. Its pathway is alkaloid biosynthesis. It functions in the pathway mycotoxin biosynthesis. In terms of biological role, monooxygenase; part of the gene cluster that mediates the biosynthesis of penigequinolones, potent insecticidal alkaloids that contain a highly modified 10-carbon prenyl group. The first stage is catalyzed by the nonribosomal peptide synthetase penN that condenses anthranilic acid and O-methyl-L-tyrosine to produce 4'-methoxycyclopeptin. 4'-methoxycyclopeptin is then converted to 4'-methoxydehydrocyclopeptin by the ketoglutarate-dependent dioxygenase penM through dehydrogenation to form a double bond between C-alpha and C-beta of the O-methyltyrosine side chain. PenM also converts its first product methoxydehydrocyclopeptin to 4'-methoxycyclopenin. The following conversion of 4'methoxycyclopenin into 4'-methoxyviridicatin is catalyzed by the cyclopenase penL. 4'-methoxyviridicatin is the precursor of quinolone natural products, and is further converted to quinolinone B. The prenyltransferase penI then catalyzes the canonical Friedel-Crafts alkylation of quinolinone B with dimethylallyl cation to yield dimethylallyl quinolone, which is subjected to FAD-dependent dehydrogenation by the FAD-linked oxidoreductase penH to yield conjugated aryl diene. The delta(3') double bond then serves as the site of the second alkylation with DMAPP catalyzed by the prenyltransferase penG to yield a carbenium ion intermediate, which can be attacked by H(2)O to yield a styrenyl quinolone containing a C3'-hydroxyprenyl chain, or undergo cyclization to yield yaequinolones J1 and J2. The conversion of the styrenyl quinolone into the tetrahydrofuran-containing yaequinolone C is performed by the FAD-dependent monooxygenase penE and involves epoxidation of the terminal C7'-C8' olefin, followed by epoxide ring opening initiated by the C3' hydroxyl group. The predicted cysteine hydrolase penJ acts as an epoxide hydrolase that enhances the rate of the 5-exo-tet cyclization step, increasing the yield of yaequinolone C. PenF catalyzes the cationic rearrangement of the epoxide formed by penE (before ring opening to produce yaequinolone C) into yaequinolone D. Finally, the short-chain dehydrogenase/reductase (SDR)-like reductase penD, catalyzes both the dehydration of yaequinolone D and the reduction of the resulting oxonium to yield penigequinolone. This chain is Monooxygenase penA, found in Penicillium thymicola.